We begin with the raw amino-acid sequence, 277 residues long: MGIKVYKPTTNGRRNMTSLDFAEITTSTPEKSLLVSLKSKAGRNNNGRITVRHQGGGHKRHYRLIDFKRNKDGVEAVVKTIEYDPNRTANIALVHYTDGVKAYIIAPKGLEVGQRIVSGPDADIKVGNALPLANIPVGTVVHNIELKPGKGGELVRAAGASAQVLGQEGKYVLVRLQSGEVRMILGTCRATIGTVGNEQQSLVNIGKAGRSRWKGIRPTVRGSVMNPNDHPHGGGEGKAPVGRKAPSTPWGKPALGLKTRNKKAKSDKLIVRRRNEK.

Residues 219-277 form a disordered region; that stretch reads TVRGSVMNPNDHPHGGGEGKAPVGRKAPSTPWGKPALGLKTRNKKAKSDKLIVRRRNEK. Residues 264 to 277 are compositionally biased toward basic and acidic residues; sequence AKSDKLIVRRRNEK.

The protein belongs to the universal ribosomal protein uL2 family. In terms of assembly, part of the 50S ribosomal subunit. Forms a bridge to the 30S subunit in the 70S ribosome.

Its function is as follows. One of the primary rRNA binding proteins. Required for association of the 30S and 50S subunits to form the 70S ribosome, for tRNA binding and peptide bond formation. It has been suggested to have peptidyltransferase activity; this is somewhat controversial. Makes several contacts with the 16S rRNA in the 70S ribosome. This Streptococcus pyogenes serotype M1 protein is Large ribosomal subunit protein uL2.